Reading from the N-terminus, the 449-residue chain is POU domain, class 3, transcription factor 1 (449 aa).

Disordered regions lie at residues 1–22 (MATTAQYLPRGPGGGAGGTGPL), 76–108 (GGGGGDWAGGPHLEHGKAGGGGTGRADDGGGGG), 132–152 (AHHLGPAMSPSPGAGGGHQPQ), 184–251 (GLHH…PSSD), and 393–449 (KRMT…GSVQ). Composition is skewed to gly residues over residues 11–20 (GPGGGAGGTG) and 93–108 (AGGGGTGRADDGGGGG). Low complexity predominate over residues 132-143 (AHHLGPAMSPSP). Positions 188–197 (ALHEDGHEAQ) are enriched in basic and acidic residues. Positions 218-230 (AGGLHAAAAHLHP) are enriched in low complexity. The POU-specific domain maps to 245-319 (EDAPSSDDLE…LLNKWLEETD (75 aa)). The segment at residues 337–396 (KRKKRTSIEVGVKGALESHFLKCPKPSAHEITGLADSLQLEKEVVRVWFCNRRQKEKRMT) is a DNA-binding region (homeobox). Residues 425–434 (PSAPPPPPPA) are compositionally biased toward pro residues.

This sequence belongs to the POU transcription factor family. Class-3 subfamily.

It localises to the nucleus. Functionally, transcription factor that binds to the octamer motif (5'-ATTTGCAT-3'). Acts as a transcriptional activator when binding cooperatively with SOX4, SOX11, or SOX12 to gene promoters. Acts as a transcriptional repressor of myelin-specific genes. This Mus musculus (Mouse) protein is POU domain, class 3, transcription factor 1 (Pou3f1).